Reading from the N-terminus, the 459-residue chain is ATP synthase subunit beta (459 aa).

An ATP-binding site is contributed by 148–155; sequence GGAGVGKT.

This sequence belongs to the ATPase alpha/beta chains family. As to quaternary structure, F-type ATPases have 2 components, CF(1) - the catalytic core - and CF(0) - the membrane proton channel. CF(1) has five subunits: alpha(3), beta(3), gamma(1), delta(1), epsilon(1). CF(0) has three main subunits: a(1), b(2) and c(9-12). The alpha and beta chains form an alternating ring which encloses part of the gamma chain. CF(1) is attached to CF(0) by a central stalk formed by the gamma and epsilon chains, while a peripheral stalk is formed by the delta and b chains.

It localises to the cell inner membrane. The catalysed reaction is ATP + H2O + 4 H(+)(in) = ADP + phosphate + 5 H(+)(out). Produces ATP from ADP in the presence of a proton gradient across the membrane. The catalytic sites are hosted primarily by the beta subunits. This is ATP synthase subunit beta from Hahella chejuensis (strain KCTC 2396).